The primary structure comprises 333 residues: DNA-directed RNA polymerase subunit alpha (333 aa).

The interval 1–233 is alpha N-terminal domain (alpha-NTD); the sequence is MVREKVRVST…DLFIPFLHAE (233 aa). The tract at residues 266 to 333 is alpha C-terminal domain (alpha-CTD); sequence KKEIAFKSIF…DILEIEKHFP (68 aa).

The protein belongs to the RNA polymerase alpha chain family. As to quaternary structure, in plastids the minimal PEP RNA polymerase catalytic core is composed of four subunits: alpha, beta, beta', and beta''. When a (nuclear-encoded) sigma factor is associated with the core the holoenzyme is formed, which can initiate transcription.

It is found in the plastid. The protein resides in the chloroplast. It catalyses the reaction RNA(n) + a ribonucleoside 5'-triphosphate = RNA(n+1) + diphosphate. DNA-dependent RNA polymerase catalyzes the transcription of DNA into RNA using the four ribonucleoside triphosphates as substrates. This Lotus japonicus (Lotus corniculatus var. japonicus) protein is DNA-directed RNA polymerase subunit alpha.